The chain runs to 1161 residues: Nuclear receptor-interacting protein 1 (1161 aa).

Residues 1-416 (MTHGEELGSD…FESSTPTTID (416 aa)) form an interaction with ZNF366 region. The LXXLL motif 1 motif lies at 21–25 (LEGLL). The tract at residues 34 to 68 (GTAINKKSAGHKEEDQNFNLSGSAFPSCQSNGPTV) is disordered. Residues 50-68 (NFNLSGSAFPSCQSNGPTV) show a composition bias toward polar residues. The interval 78–335 (MLHLKKARLL…LNGQARALPA (258 aa)) is repression domain 1. Position 104 is a phosphoserine (S104). K111 carries the N6-acetyllysine; alternate modification. Residue K111 forms a Glycyl lysine isopeptide (Lys-Gly) (interchain with G-Cter in SUMO2); alternate linkage. An LXXLL motif 2 motif is present at residues 133 to 137 (LASLL). At K158 the chain carries N6-acetyllysine. K170 participates in a covalent cross-link: Glycyl lysine isopeptide (Lys-Gly) (interchain with G-Cter in SUMO2). The LXXLL motif 3 signature appears at 185–189 (LKTLL). Residues K195 and K198 each participate in a glycyl lysine isopeptide (Lys-Gly) (interchain with G-Cter in SUMO2) cross-link. At T207 the chain carries Phosphothreonine. Position 218 is a phosphoserine (S218). An LXXLL motif 4 motif is present at residues 267–271 (LALLL). An N6-acetyllysine mark is found at K287 and K311. S358 carries the phosphoserine modification. A Glycyl lysine isopeptide (Lys-Gly) (interchain with G-Cter in SUMO2) cross-link involves residue K374. S380 is modified (phosphoserine). Positions 382–386 (LLHLL) match the LXXLL motif 5 motif. The interval 393 to 436 (TPMNGHSQNERASSFESSTPTTIDEYSDNNPSFTDDSSGDESSY) is disordered. A repression domain 2 region spans residues 411 to 701 (TPTTIDEYSD…PAGPEPGLPG (291 aa)). A required for targeting to small nuclear foci region spans residues 432–473 (DESSYSNCVPIDLSCKHRIEKPEAERPVSLENLTQSLLNTWD). The CTBP-binding; principal site motif lies at 441 to 447 (PIDLSCK). 2 positions are modified to N6-acetyllysine: K447 and K482. S488 is subject to Phosphoserine. The LXXLL motif 6 motif lies at 501-505 (LLQLL). Residue K509 forms a Glycyl lysine isopeptide (Lys-Gly) (interchain with G-Cter in SUMO2) linkage. A compositionally biased stretch (polar residues) spans 517 to 552 (NASPQDIHSDGTKFSPQNYTRTSVIESPSTNRTTPV). Positions 517-559 (NASPQDIHSDGTKFSPQNYTRTSVIESPSTNRTTPVSTPPLYT) are disordered. S519 is modified (phosphoserine). The residue at position 529 (K529) is an N6-acetyllysine. S531, S543, and S565 each carry phosphoserine. A CTBP-binding motif is present at residues 566–570 (PINLS). Disordered stretches follow at residues 604–623 (TKGK…AQNS), 639–702 (GLQS…LPGC), and 717–747 (LLGN…ERAA). At K607 the chain carries N6-acetyllysine. S672 bears the Phosphoserine mark. Positions 714-718 (LQLLL) match the LXXLL motif 7 motif. A compositionally biased stretch (basic and acidic residues) spans 724–747 (GKNEKKEKTPARDEAPQEHSERAA). Residues 736–886 (DEAPQEHSER…TAVDTANHHS (151 aa)) are repression domain 3. The interval 754 to 1161 (VKIKSEPCDD…NALTIKKESE (408 aa)) is interaction with ZNF366. Glycyl lysine isopeptide (Lys-Gly) (interchain with G-Cter in SUMO2) cross-links involve residues K757 and K803. S808 is subject to Phosphoserine. An LXXLL motif 8 motif is present at residues 820 to 824 (LSRLL). The interval 829 to 848 (ESYPADEQDKSHRNSELPTL) is disordered. Glycyl lysine isopeptide (Lys-Gly) (interchain with G-Cter in SUMO2) cross-links involve residues K851 and K902. The residue at position 932 (K932) is an N6-acetyllysine; alternate. K932 participates in a covalent cross-link: Glycyl lysine isopeptide (Lys-Gly) (interchain with G-Cter in SUMO2); alternate. Positions 937–941 (LKQLL) match the LXXLL motif 9 motif. The CTBP-binding motif lies at 947 to 951 (VRDLS). Residues 950–962 (LSPHRSDSVPDTK) are compositionally biased toward basic and acidic residues. A disordered region spans residues 950 to 976 (LSPHRSDSVPDTKKKGHKNNAPGSKPE). S1003 carries the post-translational modification Phosphoserine. Residues 1063-1076 (LTKTNPILYYMLQK) form a ligand-dependent nuclear receptor binding region. Residues K1108, K1118, and K1157 each participate in a glycyl lysine isopeptide (Lys-Gly) (interchain with G-Cter in SUMO2) cross-link. The repression domain 4 stretch occupies residues 1121 to 1161 (FFNLRSPYNSHMGNNASRPHSTNGEVYGLLGNALTIKKESE).

As to quaternary structure, interacts with CTBP1, CTBP2, ERS1, HDAC1, HDAC2, HDAC5, HDAC6, NR2C2, NR3C1, NR3C2, YWHAH, JUN and FOS. Found in a complex with both NR3C1 and YWHAH. Interacts with NR2C1 (sumoylated form and via the ligand-binding domain); the interaction results in promoting the repressor activity of NR2C1. Interacts with RARA and RXRB homodimers and RARA/RXRB heterodimers in the presence of ligand. Interacts with HDAC1 and HDAC3 via its N-terminal domain. Interacts with ZNF366. Interacts with RORA. Acetylation abolishes interaction with CTBP1. Phosphorylation enhances interaction with YWHAH. Acetylation regulates its nuclear translocation and corepressive activity. In terms of tissue distribution, expressed in the embryonic placenta. In the adult, expression is strong in the testis and brain. Also expressed at a high level in the white adipose tissue. Expressed constantly but at a weaker level in the adult heart, lung, stomach and kidney. Expressed moderately in the skeletal muscle. Expressed at a low level in the adult spleen, liver and brown adipose tissue. Expressed in the ovary at a high level in granulosa cells and at a lower level in the thecal and interstitial compartments.

The protein resides in the nucleus. Modulates transcriptional repression by nuclear hormone receptors such as NR2C1, thyroid hormone receptor and retinoic acid receptor/RARA. Essential for cumulus expansion and follicle rupture during ovulation. Also controls the balance between fat accumulation and energy expenditure. Positive regulator of the circadian clock gene expression: stimulates transcription of BMAL1, CLOCK and CRY1 by acting as a coactivator for RORA and RORC. Involved in the regulation of ovarian function. Plays a role in renal development. This is Nuclear receptor-interacting protein 1 from Mus musculus (Mouse).